A 150-amino-acid polypeptide reads, in one-letter code: Snaclec CTL-Eoc125 (150 aa).

Residues 1–23 form the signal peptide; that stretch reads MGRFISVSFGLLVVFLSLSGIGA. 3 cysteine pairs are disulfide-bonded: Cys27–Cys38, Cys55–Cys144, and Cys121–Cys136. One can recognise a C-type lectin domain in the interval 34-145; it reads YEGHCYKVFS…CSSTQQFICK (112 aa).

The protein belongs to the snaclec family. As to quaternary structure, heterodimer; disulfide-linked. Expressed by the venom gland.

The protein resides in the secreted. Interferes with one step of hemostasis (modulation of platelet aggregation, or coagulation cascade, for example). The sequence is that of Snaclec CTL-Eoc125 from Echis ocellatus (Ocellated saw-scaled viper).